A 104-amino-acid chain; its full sequence is Ycf49-like protein (104 aa).

3 consecutive transmembrane segments (helical) span residues 6–26, 41–61, and 73–93; these read IPTW…IALV, LAWG…WHFF, and LQAL…WWIY.

The protein belongs to the ycf49 family.

It localises to the cell membrane. This chain is Ycf49-like protein, found in Synechocystis sp. (strain ATCC 27184 / PCC 6803 / Kazusa).